The sequence spans 28 residues: Potassium channel toxin alpha-KTx 9.7 (28 aa).

Intrachain disulfides connect Cys-3–Cys-19, Cys-6–Cys-24, and Cys-10–Cys-26.

In terms of tissue distribution, expressed by the venom gland.

The protein localises to the secreted. Calcium channel activator. Rapidly and reversibly activates ryanodine receptor 1 (RYR1). The protein is Potassium channel toxin alpha-KTx 9.7 of Hottentotta judaicus (Black scorpion).